Consider the following 101-residue polypeptide: Small ribosomal subunit protein uS14 (101 aa).

Belongs to the universal ribosomal protein uS14 family. In terms of assembly, part of the 30S ribosomal subunit. Contacts proteins S3 and S10.

Functionally, binds 16S rRNA, required for the assembly of 30S particles and may also be responsible for determining the conformation of the 16S rRNA at the A site. The sequence is that of Small ribosomal subunit protein uS14 from Caulobacter sp. (strain K31).